A 213-amino-acid polypeptide reads, in one-letter code: Putative 3-methyladenine DNA glycosylase (213 aa).

It belongs to the DNA glycosylase MPG family.

This is Putative 3-methyladenine DNA glycosylase from Corynebacterium jeikeium (strain K411).